A 552-amino-acid chain; its full sequence is MSTYSIPYYNQMNGNYNNGMPQQTTAANQQAFPQQQQPTTTGNASQQQQQAAATAAAVQQPYNYMFYQQQGQPGQQTGQTAGQQQQQQQQQQQYDYNTYNRYQYPAATSQGNYYQQTIPNQLSQPQPQHYNGSNRNYTSAPSGAPIPSNSTSGPSQQPPLPGQQAVPIPPHVSTMQQPTPVQDTLNASSTSTVGQFQPPGIRPRVTTTMWEDEKTLCYQVDANNVSVVRRADNNMINGTKLLNVAQMTRGRRDGILKSEKVRHVVKIGSMHLKGVWIPFERALAMAQREQIVDMLYPLFVRDIKRVIQTGVTPNAAAATAAAAATATSASAPPPPPPPVAAATTTAATAISKSSSGNGNSISATSGGSNVSGASGAGSTTSPVNTKAATAAGIPQGNYYQTYNQQQYPQQYGQYNAPGKNQNTPASQPGSTTNDQYLQQQQQQQQQMYGYQSNYYQGGAANSSYYPNYYQQQQPNYASSYPYQQQQQKQQQQQPNQQQQSDQQQTSTPSGGAGTRSVHQSPQVQSLTQGSVHPSPQQHQANQSASTVAKEEK.

Disordered regions lie at residues 17-48 (NNGM…SQQQ), 70-93 (QGQP…QQQQ), and 121-180 (QLSQ…QPTP). Over residues 121–151 (QLSQPQPQHYNGSNRNYTSAPSGAPIPSNST) the composition is skewed to polar residues. Residues 204–310 (RVTTTMWEDE…RDIKRVIQTG (107 aa)) enclose the HTH APSES-type domain. Positions 238–259 (GTKLLNVAQMTRGRRDGILKSE) form a DNA-binding region, H-T-H motif. Disordered regions lie at residues 327–384 (TSAS…SPVN), 410–447 (QYGQ…QQQM), and 478–552 (SSYP…KEEK). A compositionally biased stretch (low complexity) spans 340-381 (AAATTTAATAISKSSSGNGNSISATSGGSNVSGASGAGSTTS). Residues 419-434 (KNQNTPASQPGSTTND) show a composition bias toward polar residues. Low complexity-rich tracts occupy residues 435–447 (QYLQ…QQQM) and 478–504 (SSYP…DQQQ). Residues 516–546 (SVHQSPQVQSLTQGSVHPSPQQHQANQSAST) show a composition bias toward polar residues.

This sequence belongs to the EFG1/PHD1/stuA family.

It localises to the nucleus. Putative transcription factor that stimulates pseudohyphal morphogenesis. The protein is Enhanced filamentous growth protein (EFG1) of Candida albicans (Yeast).